Consider the following 212-residue polypeptide: uncharacterized protein (212 aa).

This is an uncharacterized protein from Rickettsia prowazekii (strain Madrid E).